The sequence spans 189 residues: MPKTRRRPRRSQRKRPPTPWPTSQGLDRVFFSDTQSTCLETVYKATGAPSLGDYVRPAYIVTPYWPPVQSIRSPGTPSMDALSAQLYSSLSLDSPPSPPREPLRPLRSLPRQSLIQPPTFHPPSSRPCANTPPSEMDTWNPPLGSTSQPCLFQTPDSGPKTCTPSGEAPLSACTSTSFPPPSPGPSCPM.

The segment covering 1–16 (MPKTRRRPRRSQRKRP) has biased composition (basic residues). The disordered stretch occupies residues 1 to 27 (MPKTRRRPRRSQRKRPPTPWPTSQGLD). The Nuclear localization signal, and RNA-binding (RxRE) motif lies at 2-18 (PKTRRRPRRSQRKRPPT). The tract at residues 56 to 70 (RPAYIVTPYWPPVQS) is homomultimerization. S70 is modified (phosphoserine; by host). The Nuclear export signal motif lies at 82–93 (LSAQLYSSLSLD). The tract at residues 87-189 (YSSLSLDSPP…PPSPGPSCPM (103 aa)) is disordered. Over residues 105–114 (PLRSLPRQSL) the composition is skewed to low complexity. A homomultimerization region spans residues 123 to 131 (PSSRPCANT). Positions 143–164 (LGSTSQPCLFQTPDSGPKTCTP) are enriched in polar residues. T174 carries the phosphothreonine; by host modification. Position 177 is a phosphoserine; by host (S177). The segment covering 178–189 (FPPPSPGPSCPM) has biased composition (pro residues).

This sequence belongs to the deltaretrovirus Rex protein family. In terms of assembly, homomultimer. Multimeric assembly is essential for activity and involves XPO1. Binds to human XPO1 and KPNB1. Interacts (via N-terminal nuclear localization signal) with human NPM1. Post-translationally, phosphorylated.

The protein resides in the host nucleus. It localises to the host nucleolus. Its subcellular location is the host cytoplasm. Its function is as follows. Rex escorts unspliced gag-pro-pol and singly spliced env mRNAs out of the nucleus of infected cells. These mRNAs carry a recognition sequence called Rex responsive element (RxRE or XRE) located at the 3' region of the long terminal repeat (LTR). This function is essential since most HTLV proteins are translated from unspliced or partially spliced pre-mRNAs that cannot exit the nucleus by the pathway used by fully processed cellular mRNAs. Rex itself is translated from a fully spliced mRNA that probably readily exits the nucleus. Rex's nuclear localization signal (NLS) binds directly to KPNB1/importin beta-1 without previous binding to KPNA1/importin alpha-1. KPNB1 binds to the GDP bound form of RAN (Ran-GDP) and targets Rex to the nucleus. In the nucleus, the conversion from Ran-GDP to Ran-GTP dissociates Rex from KPNB1 and allows Rex's binding to the RRE in viral pre-mRNAs. Rex multimerizes on the RRE via cooperative assembly. This multimerization is critical for its full biological activity, since it may shield the viral RNA from being spliced or down-regulated, and probably exposes Rex's nuclear export signal (NES) to the surface. Rex can then form a complex with XPO1/CRM1, RANBP3 and Ran-GTP, leading to nuclear export of the complex. Conversion from Ran-GTP to Ran-GDP mediates dissociation of the Rex/RRE/XPO1/RANBP3/RAN complex, so that Rex can return to the nucleus for a subsequent round of export. This Human T-cell leukemia virus 1 (isolate Caribbea HS-35 subtype A) (HTLV-1) protein is Protein Rex.